We begin with the raw amino-acid sequence, 192 residues long: ATP synthase subunit b (192 aa).

Residues 7-27 traverse the membrane as a helical segment; it reads LLLVLGVMLLATGVALAAGGE.

This sequence belongs to the ATPase B chain family. As to quaternary structure, F-type ATPases have 2 components, F(1) - the catalytic core - and F(0) - the membrane proton channel. F(1) has five subunits: alpha(3), beta(3), gamma(1), delta(1), epsilon(1). F(0) has three main subunits: a(1), b(2) and c(10-14). The alpha and beta chains form an alternating ring which encloses part of the gamma chain. F(1) is attached to F(0) by a central stalk formed by the gamma and epsilon chains, while a peripheral stalk is formed by the delta and b chains.

The protein resides in the cell inner membrane. Its function is as follows. F(1)F(0) ATP synthase produces ATP from ADP in the presence of a proton or sodium gradient. F-type ATPases consist of two structural domains, F(1) containing the extramembraneous catalytic core and F(0) containing the membrane proton channel, linked together by a central stalk and a peripheral stalk. During catalysis, ATP synthesis in the catalytic domain of F(1) is coupled via a rotary mechanism of the central stalk subunits to proton translocation. Functionally, component of the F(0) channel, it forms part of the peripheral stalk, linking F(1) to F(0). The polypeptide is ATP synthase subunit b (Oleidesulfovibrio alaskensis (strain ATCC BAA-1058 / DSM 17464 / G20) (Desulfovibrio alaskensis)).